Consider the following 357-residue polypeptide: Malonyl CoA reductase (NADP) (357 aa).

13-16 lines the NADP(+) pocket; sequence TGLV. The active-site Acyl-thioester intermediate is the Cys-150. 180–181 serves as a coordination point for NADP(+); the sequence is SG. The Proton acceptor role is filled by His-245. 332 to 333 is a binding site for NADP(+); sequence NT.

Belongs to the aspartate-semialdehyde dehydrogenase family. In terms of assembly, homotetramer.

The catalysed reaction is 3-oxopropanoate + NADP(+) + CoA = malonyl-CoA + NADPH + H(+). Its function is as follows. Catalyzes the reduction of malonyl-CoA to malonate semialdehyde, a key step in the 3-hydroxypropanoate and the 3-hydroxypropanoate/4-hydroxybutyrate cycles. This Metallosphaera sedula (strain ATCC 51363 / DSM 5348 / JCM 9185 / NBRC 15509 / TH2) protein is Malonyl CoA reductase (NADP).